Here is a 348-residue protein sequence, read N- to C-terminus: Nicotinate-nucleotide--dimethylbenzimidazole phosphoribosyltransferase (348 aa).

Residue Glu315 is the Proton acceptor of the active site.

Belongs to the CobT family.

It catalyses the reaction 5,6-dimethylbenzimidazole + nicotinate beta-D-ribonucleotide = alpha-ribazole 5'-phosphate + nicotinate + H(+). The protein operates within nucleoside biosynthesis; alpha-ribazole biosynthesis; alpha-ribazole from 5,6-dimethylbenzimidazole: step 1/2. Catalyzes the synthesis of alpha-ribazole-5'-phosphate from nicotinate mononucleotide (NAMN) and 5,6-dimethylbenzimidazole (DMB). This is Nicotinate-nucleotide--dimethylbenzimidazole phosphoribosyltransferase from Dechloromonas aromatica (strain RCB).